An 847-amino-acid polypeptide reads, in one-letter code: MLRNSNKLIKSVIKNESTLLKCKNNNQRVVNYSSSSTSITSGNGIYSQIKKIEEFVSKKPSVTKVSSSSATINFNTSKSGSTNTTAVDYSKSVKIKDQKQIVLVKIGGGVIESDISSLIGSLNFLKKIGLFPIVVHGGGPQLNAELAAAGEPAEYVEGLRVTPPSVLAIAQRVFLRENLKIVEALESSGTKARPVTQGVYQATPLDPKLYGFVGNVTKIHTDALASCITNDYVPVISSLAMTPEGQVLNINADVAALELAKSINPLKILFINTTAGMKDGDGKVMQHIKLDEQYADLMKQPWVKHGTKLKLKEFKSCLDVLPPSTSITITSPDLLMKELFAKDGSGTTVERGEVMHSHESPSFDETKFFALIEKSTGTKGGRIDYQQLKTDLSKGVVKAFVNSHYTAGILVRPLSSGSSVSYVDQFFFFNNSIQSTEDSESVFKKMFENSSYIWKESSNNQLNNEWFKKIATGFITGATNNIFWTNIDTNKIENSIKECLSQSSTYLSGITKAASSKSASEKLLQDKNHKFRVGLIGARGFTGGNLVRLIDGHPNLELAIASSSTNFGKPITTEFPQLKSNLKFDNVKPENIDIFTRDHGIDGWFMALPDKISSPYIQTLENSSESPVLVDLSSDHRFNEKWTYGQPETNRAAIKESKLIANPGCYATGMFLTLKPFVNDLVTPPSCFGISGYSGAGSKPSEKNDPTRLSDNILPYKLVQHTHELEVSHQLGSPIYFMPHVGQFFQGITLTISMELKYPMTKEQVVERYQKFYQNEPLIKIDKDGIPEVKSNSGKHTVTIGGFAVNGNHLVVVTTLDNLLKGAATQALQNMNICLGLDELASIKNEL.

The acetylglutamate kinase stretch occupies residues 100 to 331 (QIVLVKIGGG…PPSTSITITS (232 aa)). Positions 352–508 (GEVMHSHESP…CLSQSSTYLS (157 aa)) constitute an N-acetyltransferase domain. The tract at residues 531-846 (FRVGLIGARG…LDELASIKNE (316 aa)) is N-acetyl-gamma-glutamyl-phosphate reductase. Cys665 is an active-site residue.

This sequence in the N-terminal section; belongs to the acetylglutamate kinase family. The protein in the C-terminal section; belongs to the NAGSA dehydrogenase family.

It is found in the mitochondrion. It catalyses the reaction N-acetyl-L-glutamate 5-semialdehyde + phosphate + NADP(+) = N-acetyl-L-glutamyl 5-phosphate + NADPH + H(+). The enzyme catalyses N-acetyl-L-glutamate + ATP = N-acetyl-L-glutamyl 5-phosphate + ADP. It functions in the pathway amino-acid biosynthesis; L-arginine biosynthesis; N(2)-acetyl-L-ornithine from L-glutamate: step 2/4. Its pathway is amino-acid biosynthesis; L-arginine biosynthesis; N(2)-acetyl-L-ornithine from L-glutamate: step 3/4. The protein is Bifunctional protein argC, mitochondrial (argC) of Dictyostelium discoideum (Social amoeba).